The primary structure comprises 66 residues: Large ribosomal subunit protein bL35 (66 aa).

The protein belongs to the bacterial ribosomal protein bL35 family.

This chain is Large ribosomal subunit protein bL35, found in Moorella thermoacetica (strain ATCC 39073 / JCM 9320).